Here is a 304-residue protein sequence, read N- to C-terminus: Acetyl-coenzyme A carboxylase carboxyl transferase subunit beta (304 aa).

One can recognise a CoA carboxyltransferase N-terminal domain in the interval 23-292 (VWTKCDSCGQ…PNPDAPREGV (270 aa)). Zn(2+) is bound by residues Cys27, Cys30, Cys46, and Cys49. The C4-type zinc-finger motif lies at 27-49 (CDSCGQVLYRAELERNLEVCPKC). A disordered region spans residues 284 to 304 (NPDAPREGVVVPPAPDQESEV).

This sequence belongs to the AccD/PCCB family. As to quaternary structure, acetyl-CoA carboxylase is a heterohexamer composed of biotin carboxyl carrier protein (AccB), biotin carboxylase (AccC) and two subunits each of ACCase subunit alpha (AccA) and ACCase subunit beta (AccD). Zn(2+) is required as a cofactor.

The protein resides in the cytoplasm. The enzyme catalyses N(6)-carboxybiotinyl-L-lysyl-[protein] + acetyl-CoA = N(6)-biotinyl-L-lysyl-[protein] + malonyl-CoA. It functions in the pathway lipid metabolism; malonyl-CoA biosynthesis; malonyl-CoA from acetyl-CoA: step 1/1. Component of the acetyl coenzyme A carboxylase (ACC) complex. Biotin carboxylase (BC) catalyzes the carboxylation of biotin on its carrier protein (BCCP) and then the CO(2) group is transferred by the transcarboxylase to acetyl-CoA to form malonyl-CoA. The protein is Acetyl-coenzyme A carboxylase carboxyl transferase subunit beta of Salmonella paratyphi A (strain ATCC 9150 / SARB42).